A 215-amino-acid polypeptide reads, in one-letter code: Agamous-like MADS-box protein AGL63 (215 aa).

In terms of domain architecture, MADS-box spans 1–61 (MRKGKRVIKK…NRLYDFCSNS (61 aa)). The K-box domain maps to 90 to 178 (CSDCVKTKES…GSSWEQLMWQ (89 aa)). 2 disordered regions span residues 143–172 (ARKS…GSSW) and 184–215 (MTCQ…SSPP).

In terms of assembly, forms homodimer. Interacts with AGL16. In terms of tissue distribution, expressed in bud pedicels, petals, anthers, style, ovary, seeds and embryos.

It is found in the nucleus. Its function is as follows. Probable transcription factor involved in the regulation of fruit growth. Contributes to integument development. Controls organ size via cell expansion. Involved in the regulation of longitudinal growth of the fruit evenly throughout the radial axis. Functions redundantly with TT16/AGL32 to repress nucellus growth and promote its degeneration. In Arabidopsis thaliana (Mouse-ear cress), this protein is Agamous-like MADS-box protein AGL63.